A 232-amino-acid chain; its full sequence is tRNA pseudouridine synthase B (232 aa).

The active-site Nucleophile is aspartate 53.

It belongs to the pseudouridine synthase TruB family. Type 1 subfamily.

The enzyme catalyses uridine(55) in tRNA = pseudouridine(55) in tRNA. Responsible for synthesis of pseudouridine from uracil-55 in the psi GC loop of transfer RNAs. The sequence is that of tRNA pseudouridine synthase B from Malacoplasma penetrans (strain HF-2) (Mycoplasma penetrans).